A 254-amino-acid polypeptide reads, in one-letter code: Aspartate/glutamate leucyltransferase (254 aa).

It belongs to the R-transferase family. Bpt subfamily.

The protein resides in the cytoplasm. The enzyme catalyses N-terminal L-glutamyl-[protein] + L-leucyl-tRNA(Leu) = N-terminal L-leucyl-L-glutamyl-[protein] + tRNA(Leu) + H(+). It carries out the reaction N-terminal L-aspartyl-[protein] + L-leucyl-tRNA(Leu) = N-terminal L-leucyl-L-aspartyl-[protein] + tRNA(Leu) + H(+). Its function is as follows. Functions in the N-end rule pathway of protein degradation where it conjugates Leu from its aminoacyl-tRNA to the N-termini of proteins containing an N-terminal aspartate or glutamate. The sequence is that of Aspartate/glutamate leucyltransferase from Xylella fastidiosa (strain 9a5c).